The primary structure comprises 242 residues: uncharacterized protein (242 aa).

An HTH gntR-type domain is found at 17-85 (QRVDERIATT…HGSGSVVRDP (69 aa)). The segment at residues 45–64 (ERDLAERLGVNRTSLRQGLA) is a DNA-binding region (H-T-H motif).

This is an uncharacterized protein from Mycobacterium tuberculosis (strain ATCC 25618 / H37Rv).